A 267-amino-acid chain; its full sequence is Protein isy-1 (267 aa).

Residues 175 to 204 (LEKLIEEKNIERINKEFAEKQAQKQQTASD) are a coiled coil. The interval 195 to 221 (QAQKQQTASDAAPENIYKVEEDDDDDL) is disordered.

Belongs to the ISY1 family. Ubiquitously expressed.

It localises to the nucleus. Its function is as follows. Regulates the processing of the mir-60 microRNA (miRNA), which in turn negatively regulates the expression of the transcription factor zip-10. Does not affect the splicing of zip-10. The sequence is that of Protein isy-1 from Caenorhabditis elegans.